We begin with the raw amino-acid sequence, 92 residues long: Large ribosomal subunit protein eL43 (92 aa).

Zn(2+) is bound by residues C39, C42, C57, and C60. A C4-type zinc finger spans residues 39 to 60 (CPVCGFPKLKRASTSIWVCGKC).

It belongs to the eukaryotic ribosomal protein eL43 family. Putative zinc-binding subfamily. As to quaternary structure, part of the 50S ribosomal subunit. Zn(2+) serves as cofactor.

Binds to the 23S rRNA. This Methanocaldococcus jannaschii (strain ATCC 43067 / DSM 2661 / JAL-1 / JCM 10045 / NBRC 100440) (Methanococcus jannaschii) protein is Large ribosomal subunit protein eL43.